Consider the following 128-residue polypeptide: MTTSSYFLLVALGLLLYVCRSSFGSEHTCESDASPHPQGVCGSPLAEAVEAACELEESLQGGTGKKRGRASLLRKRRAFLSMLKARAKRNEASPLQRSGRGIVCECCKNHCNIEELTEYCPPVTEGSG.

An N-terminal signal peptide occupies residues 1–24; the sequence is MTTSSYFLLVALGLLLYVCRSSFG. Intrachain disulfides connect C29-C104, C41-C107, C53-C120, and C106-C111. A propeptide spans 59-89 (c peptide); it reads LQGGTGKKRGRASLLRKRRAFLSMLKARAKR. Position 115 is a 4-carboxyglutamate; partial (E115). S127 carries the post-translational modification Serine amide.

This sequence belongs to the insulin family. Heterodimer of A and B chains; disulfide-linked. As to expression, expressed by the venom gland.

The protein localises to the secreted. Its function is as follows. This venom insulin facilitates prey capture by rapidly inducing hypoglycemic shock. Intraperitoneal injection of this peptide into zebrafish lowers blood glucose with the same potency than human insulin. In vivo, when applied to water, this peptide reduces overall locomotor activity of zebrafish larvae, observed as a significant decrease in the percentage of time spent swimming and movement frequency. In Conus floridulus (Cone snail), this protein is Con-Ins F2.